The primary structure comprises 229 residues: ATP synthase subunit a (229 aa).

7 helical membrane passes run 25–45 (VHII…VLGA), 58–75 (FLEV…SVTG), 81–101 (FFPL…IGLV), 110–130 (SINT…FIGI), 141–161 (FLGP…IGHL), 175–195 (MMGH…FFAP), and 196–216 (LPIM…FFLL).

The protein belongs to the ATPase A chain family. F-type ATPases have 2 components, CF(1) - the catalytic core - and CF(0) - the membrane proton channel. CF(1) has five subunits: alpha(3), beta(3), gamma(1), delta(1), epsilon(1). CF(0) has three main subunits: a(1), b(2) and c(9-12). The alpha and beta chains form an alternating ring which encloses part of the gamma chain. CF(1) is attached to CF(0) by a central stalk formed by the gamma and epsilon chains, while a peripheral stalk is formed by the delta and b chains.

Its subcellular location is the cell inner membrane. Key component of the proton channel; it plays a direct role in the translocation of protons across the membrane. This is ATP synthase subunit a from Desulfosudis oleivorans (strain DSM 6200 / JCM 39069 / Hxd3) (Desulfococcus oleovorans).